Here is an 85-residue protein sequence, read N- to C-terminus: U4-theraphotoxin-Hhn1ab (85 aa).

An N-terminal signal peptide occupies residues M1–A22. A propeptide spanning residues E23–R48 is cleaved from the precursor. 2 cysteine pairs are disulfide-bonded: C56/C77 and C71/C82.

It belongs to the neurotoxin 12 (Hwtx-2) family. 02 (Hwtx-2) subfamily. As to expression, expressed by the venom gland.

It is found in the secreted. Functionally, postsynaptic neurotoxin. The polypeptide is U4-theraphotoxin-Hhn1ab (Cyriopagopus hainanus (Chinese bird spider)).